A 515-amino-acid polypeptide reads, in one-letter code: Serine--tRNA ligase, cytoplasmic (515 aa).

Residues 9 to 61 (RTDKGGDPEIIRETQRKRFKDVSLVDKLVQADTEWRKCRFTADNLNKAKNLCS) are interaction with tRNA. Positions 271 and 302 each coordinate L-serine. ATP contacts are provided by residues 302–304 (RQE) and 318–321 (VHQF). E325 lines the L-serine pocket. 391–394 (ELVS) is an ATP binding site. N427 lines the L-serine pocket. The segment at 475–515 (PIDQETTKKQKKQQEGGKKKKHQGGDADLENKVENMSVNDS) is disordered. Over residues 479 to 507 (ETTKKQKKQQEGGKKKKHQGGDADLENKV) the composition is skewed to basic and acidic residues. Positions 482–494 (KKQKKQQEGGKKK) match the Nuclear localization signal motif.

Belongs to the class-II aminoacyl-tRNA synthetase family. Type-1 seryl-tRNA synthetase subfamily.

The protein localises to the cytoplasm. The protein resides in the nucleus. The catalysed reaction is tRNA(Ser) + L-serine + ATP = L-seryl-tRNA(Ser) + AMP + diphosphate + H(+). The enzyme catalyses tRNA(Sec) + L-serine + ATP = L-seryl-tRNA(Sec) + AMP + diphosphate + H(+). Catalyzes the attachment of serine to tRNA(Ser) in a two-step reaction: serine is first activated by ATP to form Ser-AMP and then transferred to the acceptor end of tRNA(Ser). Is probably also able to aminoacylate tRNA(Sec) with serine, to form the misacylated tRNA L-seryl-tRNA(Sec), which will be further converted into selenocysteinyl-tRNA(Sec). In the nucleus, binds to the vegfa core promoter and prevents myc binding and transcriptional activation by myc. Thereby inhibits the production of vegfa and sprouting angiogenesis mediated by vegfa. This is Serine--tRNA ligase, cytoplasmic (sars1) from Danio rerio (Zebrafish).